The sequence spans 197 residues: RNA polymerase II subunit A C-terminal domain phosphatase ssup-72 (197 aa).

Serine 39 carries the phosphoserine modification.

The protein belongs to the SSU72 phosphatase family. As to quaternary structure, may interact with synd-1 (via C-terminus); the interaction may prevent ssup-72 binding to RNA polymerase II ama-1. May interact with RNA polymerase II ama-1. May be phosphorylated by kin-20. In terms of tissue distribution, expressed in epidermis, intestine and nervous system.

The protein resides in the nucleus. The enzyme catalyses O-phospho-L-seryl-[protein] + H2O = L-seryl-[protein] + phosphate. It catalyses the reaction O-phospho-L-threonyl-[protein] + H2O = L-threonyl-[protein] + phosphate. Its function is as follows. Protein phosphatase that dephosphorylates 'Ser-5' of the heptad repeats YSPTSPS in the C-terminal domain of the large RNA polymerase II subunit ama-1. By regulating the phosphorylation status of ama-1 and thus ama-1 binding to specific polyadenylation sites, regulates alternative polyadenylation of pre-mRNAs, including unc-44 and dlk-1 mRNAs. This results in the tissue-specific expression of unc-44 isoforms. This Caenorhabditis elegans protein is RNA polymerase II subunit A C-terminal domain phosphatase ssup-72.